A 111-amino-acid polypeptide reads, in one-letter code: Large ribosomal subunit protein uL22 (111 aa).

The protein belongs to the universal ribosomal protein uL22 family. Part of the 50S ribosomal subunit.

Its function is as follows. This protein binds specifically to 23S rRNA; its binding is stimulated by other ribosomal proteins, e.g. L4, L17, and L20. It is important during the early stages of 50S assembly. It makes multiple contacts with different domains of the 23S rRNA in the assembled 50S subunit and ribosome. Functionally, the globular domain of the protein is located near the polypeptide exit tunnel on the outside of the subunit, while an extended beta-hairpin is found that lines the wall of the exit tunnel in the center of the 70S ribosome. This is Large ribosomal subunit protein uL22 from Francisella tularensis subsp. tularensis (strain FSC 198).